The primary structure comprises 162 residues: MTPLFRKAVWLLFAVSVCAFAGSLAAQYVLGMEPCVLCISQRLCVLATALCTAIVLMCRPRRRAGGLFGAVFISIPAVTGISVAAYQLWLQSLPPGTAPSCGAPWTFRLKGWPLFDWFEPVVRGFGNCAEPDYLLGIALPVWSVAYFLAVVLTVWWAWARAK.

At 1-8 (MTPLFRKA) the chain is on the cytoplasmic side. Residues 9-25 (VWLLFAVSVCAFAGSLA) form a helical membrane-spanning segment. The Periplasmic segment spans residues 26–43 (AQYVLGMEPCVLCISQRL). Cys35 and Cys38 are joined by a disulfide. Residues 44-60 (CVLATALCTAIVLMCRP) traverse the membrane as a helical segment. The Cytoplasmic segment spans residues 61–67 (RRRAGGL). A helical transmembrane segment spans residues 68–85 (FGAVFISIPAVTGISVAA). Over 86 to 141 (YQLWLQSLPPGTAPSCGAPWTFRLKGWPLFDWFEPVVRGFGNCAEPDYLLGIALPV) the chain is Periplasmic. Residues Cys101 and Cys128 are joined by a disulfide bond. The chain crosses the membrane as a helical span at residues 142-160 (WSVAYFLAVVLTVWWAWAR). The Cytoplasmic portion of the chain corresponds to 161–162 (AK).

This sequence belongs to the DsbB family.

Its subcellular location is the cell inner membrane. In terms of biological role, required for disulfide bond formation in some periplasmic proteins. Acts by oxidizing the DsbA protein. The protein is Disulfide bond formation protein B of Neisseria meningitidis serogroup B (strain ATCC BAA-335 / MC58).